A 1554-amino-acid polypeptide reads, in one-letter code: Myosin-2 (1554 aa).

The 54-residue stretch at 4 to 57 (EVGTRCWYPDKQQGWIGGEITKHTNLSNKHQLELTLEDNQIVEIESETLDETKD) folds into the Myosin N-terminal SH3-like domain. Positions 70 to 774 (EATEDLTSLS…MLAYLEKLRS (705 aa)) constitute a Myosin motor domain. 164-171 (GESGAGKT) serves as a coordination point for ATP. The actin-binding stretch occupies residues 443–523 (FIGVLDIYGF…LGILSLLDEE (81 aa)). IQ domains follow at residues 778–798 (HNSS…KKYL), 800–824 (IISS…DLEF), 825–847 (KTQA…KTIS), 848–872 (LLSA…LQRR), 873–895 (QRDA…SFNT), and 896–925 (TRRS…EAKS). Positions 926-1079 (VNHLKEVSYK…IARLQAAVRS (154 aa)) form a coiled coil. Positions 1080-1554 (GVTSSTITST…VTVQESQRTE (475 aa)) are non alpha-helical, tail domain. Residues 1082 to 1093 (TSSTITSTPTAS) show a composition bias toward low complexity. The tract at residues 1082–1109 (TSSTITSTPTASRRFSAHSSVADGTSPR) is disordered. Positions 1098 to 1109 (AHSSVADGTSPR) are enriched in polar residues. The Dilute domain maps to 1205–1480 (AEVLSTIQKL…LNFVADRVKK (276 aa)).

Belongs to the TRAFAC class myosin-kinesin ATPase superfamily. Myosin family. In terms of assembly, homodimer. Interacts with calmodulin (CMD1) and the myosin light chain MLC1 through its IQ repeats.

Functionally, myosin heavy chain that is required for the cell cycle-regulated transport of various organelles and proteins for their segregation. Functions by binding with its tail domain to receptor proteins on organelles and exerting force with its N-terminal motor domain against actin filaments, thereby transporting its cargo along polarized actin cables. This is Myosin-2 (MYO2) from Lachancea kluyveri (strain ATCC 58438 / CBS 3082 / BCRC 21498 / NBRC 1685 / JCM 7257 / NCYC 543 / NRRL Y-12651) (Yeast).